Here is a 341-residue protein sequence, read N- to C-terminus: Ribosomal RNA small subunit methyltransferase C (341 aa).

This sequence belongs to the methyltransferase superfamily. RsmC family. In terms of assembly, monomer.

It is found in the cytoplasm. It catalyses the reaction guanosine(1207) in 16S rRNA + S-adenosyl-L-methionine = N(2)-methylguanosine(1207) in 16S rRNA + S-adenosyl-L-homocysteine + H(+). Specifically methylates the guanine in position 1207 of 16S rRNA in the 30S particle. This chain is Ribosomal RNA small subunit methyltransferase C, found in Shewanella pealeana (strain ATCC 700345 / ANG-SQ1).